A 283-amino-acid polypeptide reads, in one-letter code: Pantothenate synthetase (283 aa).

30-37 provides a ligand contact to ATP; sequence MGNLHDGH. His-37 functions as the Proton donor in the catalytic mechanism. A (R)-pantoate-binding site is contributed by Gln-61. Residue Gln-61 participates in beta-alanine binding. Residue 149–152 coordinates ATP; sequence GEKD. Gln-155 contacts (R)-pantoate. 186–189 is a binding site for ATP; the sequence is LSSR.

The protein belongs to the pantothenate synthetase family. Homodimer.

It localises to the cytoplasm. It catalyses the reaction (R)-pantoate + beta-alanine + ATP = (R)-pantothenate + AMP + diphosphate + H(+). The protein operates within cofactor biosynthesis; (R)-pantothenate biosynthesis; (R)-pantothenate from (R)-pantoate and beta-alanine: step 1/1. In terms of biological role, catalyzes the condensation of pantoate with beta-alanine in an ATP-dependent reaction via a pantoyl-adenylate intermediate. The protein is Pantothenate synthetase of Escherichia coli O45:K1 (strain S88 / ExPEC).